The sequence spans 422 residues: Acylglycerol kinase, mitochondrial (422 aa).

N6-acetyllysine is present on K6. Residues 15–31 (TTAGLCLLTWGGHWLYG) are hydrophobic. One can recognise a DAGKc domain in the interval 58–199 (AQVKKATVFL…LDVLQIKGEK (142 aa)). The interval 249 to 271 (QASISYTGPTERPPNEPEETPVQ) is disordered.

Belongs to the AGK family. Component of the TIM22 complex, which core is composed of TIMM22, associated with TIMM10 (TIMM10A and/or TIMM10B), TIMM9, AGK and TIMM29. Interacts with SMIM26. Mg(2+) is required as a cofactor. Highly expressed in muscle, heart, kidney and brain.

The protein localises to the mitochondrion inner membrane. Its subcellular location is the mitochondrion intermembrane space. The enzyme catalyses a monoacylglycerol + ATP = a monoacyl-sn-glycero-3-phosphate + ADP + H(+). It catalyses the reaction a 1,2-diacyl-sn-glycerol + ATP = a 1,2-diacyl-sn-glycero-3-phosphate + ADP + H(+). The catalysed reaction is an N-acylsphing-4-enine + ATP = an N-acylsphing-4-enine 1-phosphate + ADP + H(+). It carries out the reaction 1-(9Z-octadecenoyl)-sn-glycerol + ATP = 1-(9Z-octadecenoyl)-sn-glycero-3-phosphate + ADP + H(+). The enzyme catalyses 1,2-di-(9Z-octadecenoyl)-sn-glycerol + ATP = 1,2-di-(9Z-octadecenoyl)-sn-glycero-3-phosphate + ADP + H(+). It catalyses the reaction a 1-acyl-sn-glycerol + ATP = a 1-acyl-sn-glycero-3-phosphate + ADP + H(+). The catalysed reaction is 1-hexadecanoyl-sn-glycerol + ATP = 1-hexadecanoyl-sn-glycero-3-phosphate + ADP + H(+). It carries out the reaction a 2-acylglycerol + ATP = a 2-acyl-sn-glycerol 3-phosphate + ADP + H(+). The enzyme catalyses 2-(5Z,8Z,11Z,14Z-eicosatetraenoyl)-glycerol + ATP = 2-(5Z,8Z,11Z,14Z-eicosatetraenoyl)-sn-glycero-3-phosphate + ADP + H(+). It catalyses the reaction 1-(5Z,8Z,11Z,14Z-eicosatetraenoyl)-sn-glycerol + ATP = 1-(5Z,8Z,11Z,14Z-eicosatetraenoyl)-sn-glycero-3-phosphate + ADP + H(+). The catalysed reaction is N-(hexanoyl)sphing-4-enine + ATP = N-hexanoylsphing-4-enine 1-phosphate + ADP + H(+). It functions in the pathway lipid metabolism; glycerolipid metabolism. Functionally, lipid kinase that can phosphorylate both monoacylglycerol and diacylglycerol to form lysophosphatidic acid (LPA) and phosphatidic acid (PA), respectively. Does not phosphorylate sphingosine. Phosphorylates ceramide. Phosphorylates 1,2-dioleoylglycerol more rapidly than 2,3-dioleoylglycerol. Independently of its lipid kinase activity, acts as a component of the TIM22 complex. The TIM22 complex mediates the import and insertion of multi-pass transmembrane proteins into the mitochondrial inner membrane by forming a twin-pore translocase that uses the membrane potential as the external driving force. In the TIM22 complex, required for the import of a subset of metabolite carriers into mitochondria, such as ANT1/SLC25A4 and SLC25A24, while it is not required for the import of TIMM23. Overexpression increases the formation and secretion of LPA, resulting in transactivation of EGFR and activation of the downstream MAPK signaling pathway, leading to increased cell growth. The chain is Acylglycerol kinase, mitochondrial from Homo sapiens (Human).